We begin with the raw amino-acid sequence, 529 residues long: UDP-glucuronosyltransferase 2B1 (529 aa).

The N-terminal stretch at 1–23 is a signal peptide; sequence MSMKQTSVFLLIQLICYFRPGAC. 2 N-linked (GlcNAc...) asparagine glycosylation sites follow: N134 and N316. A helical membrane pass occupies residues 494–510; the sequence is VIGFLLLCVVGVVFIIT.

It belongs to the UDP-glycosyltransferase family.

It is found in the endoplasmic reticulum membrane. The catalysed reaction is glucuronate acceptor + UDP-alpha-D-glucuronate = acceptor beta-D-glucuronoside + UDP + H(+). It catalyses the reaction 17beta-estradiol + UDP-alpha-D-glucuronate = 17beta-estradiol 17-O-(beta-D-glucuronate) + UDP + H(+). In terms of biological role, UDP-glucuronosyltransferase (UGT) that catalyzes phase II biotransformation reactions in which lipophilic substrates are conjugated with glucuronic acid to increase the metabolite's water solubility, thereby facilitating excretion into either the urine or bile. Essential for the elimination and detoxification of drugs, xenobiotics and endogenous compounds. Catalyzes the glucuronidation of the endogenous estrogen hormone estradiol. The chain is UDP-glucuronosyltransferase 2B1 from Rattus norvegicus (Rat).